Consider the following 400-residue polypeptide: Glutamyl-tRNA reductase (400 aa).

Substrate is bound by residues 45-48 (TCNR), Ser-103, 108-110 (EDQ), and Gln-114. Cys-46 (nucleophile) is an active-site residue. 179 to 184 (GYGEIG) provides a ligand contact to NADP(+).

This sequence belongs to the glutamyl-tRNA reductase family. Homodimer.

It catalyses the reaction (S)-4-amino-5-oxopentanoate + tRNA(Glu) + NADP(+) = L-glutamyl-tRNA(Glu) + NADPH + H(+). It participates in porphyrin-containing compound metabolism; protoporphyrin-IX biosynthesis; 5-aminolevulinate from L-glutamyl-tRNA(Glu): step 1/2. Its function is as follows. Catalyzes the NADPH-dependent reduction of glutamyl-tRNA(Glu) to glutamate 1-semialdehyde (GSA). This chain is Glutamyl-tRNA reductase, found in Clostridium perfringens (strain 13 / Type A).